Consider the following 60-residue polypeptide: Pepsin-3 (60 aa).

Positions 1–35 (INVPLTRHKSMRESLREKGIELPYQDPAIKYRPEF) are cleaved as a propeptide — activation peptide.

This sequence belongs to the peptidase A1 family.

This is Pepsin-3 from Thunnus orientalis (North Pacific bluefin tuna).